Reading from the N-terminus, the 350-residue chain is DNA polymerase IV (350 aa).

Positions 7-188 constitute a UmuC domain; it reads IIHIDMDYFF…LPVKKLFGVG (182 aa). Residues Asp-11 and Asp-106 each coordinate Mg(2+). The active site involves Glu-107.

It belongs to the DNA polymerase type-Y family. As to quaternary structure, monomer. Mg(2+) is required as a cofactor.

It is found in the cytoplasm. It catalyses the reaction DNA(n) + a 2'-deoxyribonucleoside 5'-triphosphate = DNA(n+1) + diphosphate. Its function is as follows. Poorly processive, error-prone DNA polymerase involved in untargeted mutagenesis. Copies undamaged DNA at stalled replication forks, which arise in vivo from mismatched or misaligned primer ends. These misaligned primers can be extended by PolIV. Exhibits no 3'-5' exonuclease (proofreading) activity. May be involved in translesional synthesis, in conjunction with the beta clamp from PolIII. This is DNA polymerase IV from Francisella philomiragia subsp. philomiragia (strain ATCC 25017 / CCUG 19701 / FSC 153 / O#319-036).